The sequence spans 237 residues: MESSTHVSVGISQLFQCSYLEDQQEQLLIIQEPFLDPLLFERLLQLGFRRSGDAIYKPRCPSCSACIALRVPVRSFQPSKRQKRTLAKNKDLTVNWVNESSDEHYALYEKYINLRHFDGPMFPASREQYEHFVLCDWAPPGFVELRLEGKLLAVAVTDVLPTSLSAIYSFFDPDFDARSLGSQLILTQMALAADMDKAFVYLGYQIDANRKMCYKRLYRPYQILTQNGWEFHTNANL.

It belongs to the R-transferase family. Bpt subfamily.

Its subcellular location is the cytoplasm. It catalyses the reaction N-terminal L-glutamyl-[protein] + L-leucyl-tRNA(Leu) = N-terminal L-leucyl-L-glutamyl-[protein] + tRNA(Leu) + H(+). The enzyme catalyses N-terminal L-aspartyl-[protein] + L-leucyl-tRNA(Leu) = N-terminal L-leucyl-L-aspartyl-[protein] + tRNA(Leu) + H(+). Functions in the N-end rule pathway of protein degradation where it conjugates Leu from its aminoacyl-tRNA to the N-termini of proteins containing an N-terminal aspartate or glutamate. The polypeptide is Aspartate/glutamate leucyltransferase (Shewanella amazonensis (strain ATCC BAA-1098 / SB2B)).